A 128-amino-acid chain; its full sequence is MAKTKGEKRNKSAINEVVTRECTIHLAKRVHNIGFKKRAPRAIKEIRKFTEREMGTNDVRIDTRLNKHIWSKGISLRYRSTPFRVRVRLARRRNDDEDSPNKLYTLVTYVPVPTFKNLQTENVESSDD.

It belongs to the eukaryotic ribosomal protein eL31 family.

The sequence is that of Large ribosomal subunit protein eL31 (RpL31) from Drosophila virilis (Fruit fly).